The following is a 170-amino-acid chain: Cathelicidin antimicrobial peptide (170 aa).

The signal sequence occupies residues 1-30 (MKTQRDGHSLGWWSLVLLLLGLVMPLAIIA). Positions 31–131 (QVLSYKEAVL…DISCDKDNKR (101 aa)) are cleaved as a propeptide — cathelin-like domain (CLD). Disulfide bonds link Cys86/Cys97 and Cys108/Cys125. The active core stretch occupies residues 150–162 (SKRIVQRIKDFLR).

It belongs to the cathelicidin family. Monomer, homodimer or homotrimer (in vitro). Oligomerizes as tetra- or hexamer in solution (in vitro). Proteolytically cleaved by proteinase PRTN3 into antibacterial peptide LL-37. Proteolytically cleaved by cathepsin CTSG and neutrophil elastase ELANE. In terms of processing, resistant to proteolytic degradation in solution, and when bound to both zwitterionic (mimicking mammalian membranes) and negatively charged membranes (mimicking bacterial membranes). Post-translationally, after secretion onto the skin surface, the CAMP gene product is processed by a serine protease-dependent mechanism into multiple novel antimicrobial peptides distinct from and shorter than cathelicidin LL-37. These peptides show enhanced antimicrobial action, acquiring the ability to kill skin pathogens such as S.aureus, E.coli and C.albicans. These peptides have lost the ability to stimulate CXCL8/IL8 release from keratinocytes. The peptides act synergistically, killing bacteria at lower concentrations when present together, and maintain activity at increased salt condition.

The protein localises to the secreted. The protein resides in the vesicle. Functionally, antimicrobial protein that is an integral component of the innate immune system. Binds to bacterial lipopolysaccharides (LPS). Acts via neutrophil N-formyl peptide receptors to enhance the release of CXCL2. Postsecretory processing generates multiple cathelicidin antimicrobial peptides with various lengths which act as a topical antimicrobial defense in sweat on skin. The unprocessed precursor form, cathelicidin antimicrobial peptide, inhibits the growth of Gram-negative E.coli and E.aerogenes with efficiencies comparable to that of the mature peptide LL-37 (in vitro). In terms of biological role, antimicrobial peptide that is an integral component of the innate immune system. Binds to bacterial lipopolysaccharides (LPS). Causes membrane permeabilization by forming transmembrane pores (in vitro). Causes lysis of E.coli. Exhibits antimicrobial activity against Gram-negative bacteria such as P.aeruginosa, S.typhimurium, E.aerogenes, E.coli and P.syringae, Gram-positive bacteria such as L.monocytogenes, S.epidermidis, S.pyogenes and S.aureus, as well as vancomycin-resistant enterococci (in vitro). Exhibits antimicrobial activity against methicillin-resistant S.aureus, P.mirabilis, and C.albicans in low-salt media, but not in media containing 100 mM NaCl (in vitro). Forms chiral supramolecular assemblies with quinolone signal (PQS) molecules of P.aeruginosa, which may lead to interference of bacterial quorum signaling and perturbance of bacterial biofilm formation. May form supramolecular fiber-like assemblies on bacterial membranes. Induces cytokine and chemokine producation as well as TNF/TNFA and CSF2/GMCSF production in normal human keratinocytes. Exhibits hemolytic activity against red blood cells. Exhibits antimicrobial activity against E.coli and B.megaterium (in vitro). The protein is Cathelicidin antimicrobial peptide of Gorilla gorilla gorilla (Western lowland gorilla).